Reading from the N-terminus, the 186-residue chain is MSSHKAGVTGVAERYATALYELAEDRGALDQVSADLRSLKAMLDESGDLRRVIASPVIGRDDQRKALTALAEKAGFHEIVRNFLGVVAAKHRSFAVPGMIGAFLERLAARRGEVTARIVSATALTSAQKSALTTALNKATGNTVTIDASVDPALLGGMVVRVGSRMVDSSLSTKLKRLQLAMKGVG.

This sequence belongs to the ATPase delta chain family. In terms of assembly, F-type ATPases have 2 components, F(1) - the catalytic core - and F(0) - the membrane proton channel. F(1) has five subunits: alpha(3), beta(3), gamma(1), delta(1), epsilon(1). CF(0) has four main subunits: a(1), b(1), b'(1) and c(10-14). The alpha and beta chains form an alternating ring which encloses part of the gamma chain. F(1) is attached to F(0) by a central stalk formed by the gamma and epsilon chains, while a peripheral stalk is formed by the delta, b and b' chains.

Its subcellular location is the cell inner membrane. Its function is as follows. F(1)F(0) ATP synthase produces ATP from ADP in the presence of a proton or sodium gradient. F-type ATPases consist of two structural domains, F(1) containing the extramembraneous catalytic core and F(0) containing the membrane proton channel, linked together by a central stalk and a peripheral stalk. During catalysis, ATP synthesis in the catalytic domain of F(1) is coupled via a rotary mechanism of the central stalk subunits to proton translocation. This protein is part of the stalk that links CF(0) to CF(1). It either transmits conformational changes from CF(0) to CF(1) or is implicated in proton conduction. This is ATP synthase subunit delta from Rhodospirillum rubrum (strain ATCC 11170 / ATH 1.1.1 / DSM 467 / LMG 4362 / NCIMB 8255 / S1).